The chain runs to 78 residues: Translational regulator CsrA (78 aa).

The protein belongs to the CsrA/RsmA family. Homodimer; the beta-strands of each monomer intercalate to form a hydrophobic core, while the alpha-helices form wings that extend away from the core.

It is found in the cytoplasm. Its function is as follows. A translational regulator that binds mRNA to regulate translation initiation and/or mRNA stability. Usually binds in the 5'-UTR at or near the Shine-Dalgarno sequence preventing ribosome-binding, thus repressing translation. Its main target seems to be the major flagellin gene, while its function is anatagonized by FliW. The chain is Translational regulator CsrA from Natranaerobius thermophilus (strain ATCC BAA-1301 / DSM 18059 / JW/NM-WN-LF).